The chain runs to 329 residues: Beta-ketoacyl-[acyl-carrier-protein] synthase III (329 aa).

Active-site residues include Cys-113 and His-255. Residues 256-260 (QANQR) form an ACP-binding region. Asn-285 is an active-site residue.

Belongs to the thiolase-like superfamily. FabH family. In terms of assembly, homodimer.

The protein localises to the cytoplasm. It catalyses the reaction malonyl-[ACP] + acetyl-CoA + H(+) = 3-oxobutanoyl-[ACP] + CO2 + CoA. It participates in lipid metabolism; fatty acid biosynthesis. In terms of biological role, catalyzes the condensation reaction of fatty acid synthesis by the addition to an acyl acceptor of two carbons from malonyl-ACP. Catalyzes the first condensation reaction which initiates fatty acid synthesis and may therefore play a role in governing the total rate of fatty acid production. Possesses both acetoacetyl-ACP synthase and acetyl transacylase activities. Its substrate specificity determines the biosynthesis of branched-chain and/or straight-chain of fatty acids. This is Beta-ketoacyl-[acyl-carrier-protein] synthase III from Chlorobium phaeovibrioides (strain DSM 265 / 1930) (Prosthecochloris vibrioformis (strain DSM 265)).